The following is a 2839-amino-acid chain: PDZ domain-containing protein 2 (2839 aa).

The PDZ 1 domain maps to 85-182 (LSFGNIPVFG…LIMLRRFKHK (98 aa)). The tract at residues 185–318 (STYNGNSSNS…RFSKGGKTDF (134 aa)) is disordered. A compositionally biased stretch (low complexity) spans 189–202 (GNSSNSSEPGETPT). Residues 280–296 (HLERSEVDRGTEHRIPK) show a composition bias toward basic and acidic residues. Residues 334–419 (KMELLKESDG…MVQLVVASKE (86 aa)) enclose the PDZ 2 domain. Residues 437–447 (TSSVEDVSSWT) show a composition bias toward polar residues. Residues 437–501 (TSSVEDVSSW…PKQGSNKIKL (65 aa)) are disordered. Acidic residues predominate over residues 448 to 461 (DNEDQEADGEEDEG). The residue at position 568 (Ser-568) is a Phosphoserine. Residues 586 to 672 (IIGLYKEKGK…GLFVLTVRTK (87 aa)) enclose the PDZ 3 domain. Positions 678–697 (LTPCSTPTHMSRSASPNFNT) are enriched in polar residues. The disordered stretch occupies residues 678-723 (LTPCSTPTHMSRSASPNFNTSGGASAGGSDEGSSSSLGRKTPGPKD). The PDZ 4 domain maps to 728–813 (EVTLNKEPRV…GPVRLVIGRH (86 aa)). Composition is skewed to polar residues over residues 832–843 (YQESKEANSSPG) and 894–908 (GCSTSEEGSLPPSTS). 2 disordered regions span residues 832–852 (YQESKEANSSPGLGTPLKSPS) and 879–921 (DFMV…ANSL). Phosphoserine is present on residues Ser-944 and Ser-948. 14 disordered regions span residues 984–1033 (SLPG…ISAP), 1062–1155 (SAEA…PCDL), 1216–1493 (KAAS…GAPA), 1530–1620 (FHED…LPTQ), 1638–1712 (PRES…SPLS), 1809–1865 (NQGT…DLSK), 1892–1976 (GKAK…SVSD), 2009–2079 (PDRG…GNIM), 2135–2166 (QVAESSTSHPSSLPSHASQAEQEMSRSFSMAK), 2178–2211 (IRKAEYSQGKSSLMSDSRGVPRNSIPGGPSGEDH), 2232–2251 (HFGREGHPPHSLGRSRDSQV), 2353–2383 (AKSGASPFLSVSSKPPIGRRSSGSIVSGSLG), 2426–2481 (SRQN…SRSK), and 2516–2564 (ITPR…GEAA). The span at 1012-1022 (MDVHNQEERPR) shows a compositional bias: basic and acidic residues. 7 stretches are compositionally biased toward polar residues: residues 1092–1111 (RTDTQSPTNTGSPSSPQQKS), 1138–1147 (SGSQTVNLTG), 1221–1236 (LGQQPMTELDSSSDLI), 1250–1269 (SKTSVDTGQVSRPENPSQPA), 1305–1315 (TRSASETSTPH), 1384–1401 (SVSSRAPQASLSMLPSTD), and 1440–1453 (RSPSSQTGDSGSQE). Positions 1662 to 1672 (SSQPSSLLEMS) are enriched in low complexity. Residues 1698 to 1711 (EVTSASSAMENSPL) show a composition bias toward polar residues. Phosphoserine is present on Ser-1850. Residues 1919 to 1931 (SPQTSHKTLSKAV) show a composition bias toward polar residues. The span at 1936–1945 (HVADHEDPDR) shows a compositional bias: basic and acidic residues. Residues 2139-2152 (SSTSHPSSLPSHAS) are compositionally biased toward low complexity. Residues 2370–2383 (GRRSSGSIVSGSLG) are compositionally biased toward low complexity. Composition is skewed to polar residues over residues 2426–2437 (SRQNPPETSSKG), 2470–2480 (RHTQPSPVSRS), and 2546–2559 (PKTSAAETPSSASD). One can recognise a PDZ 5 domain in the interval 2622–2706 (FIVLNRKEGS…HKDALVVIKK (85 aa)). Positions 2709-2729 (DQPRPSARQEPPTANGKGLLS) are disordered. Residues 2750–2835 (CVEVLKTSAG…GPVQLLIRKH (86 aa)) form the PDZ 6 domain.

As to quaternary structure, interacts with SCN10A, CTNND2 and PKP4. Post-translationally, a secreted form is produced by caspase-mediated proteolytic cleavage. As to expression, isoform 2 is expressed (at protein level) in prostate and many prostate tumors.

Its subcellular location is the nucleus. It localises to the cytoplasm. It is found in the endoplasmic reticulum. The protein localises to the secreted. The polypeptide is PDZ domain-containing protein 2 (PDZD2) (Homo sapiens (Human)).